A 259-amino-acid polypeptide reads, in one-letter code: Protoheme IX farnesyltransferase (259 aa).

8 consecutive transmembrane segments (helical) span residues 15–35, 61–81, 83–103, 109–129, 137–157, 182–202, 208–228, and 236–256; these read LICL…NGVL, ATVA…TFLP, LTTA…TLWF, WGVV…ASAV, PLIL…ALAL, VCIF…WFTG, FAIE…LYLV, and AFQA…IDIC.

The protein belongs to the UbiA prenyltransferase family. Protoheme IX farnesyltransferase subfamily.

The protein resides in the cell inner membrane. It catalyses the reaction heme b + (2E,6E)-farnesyl diphosphate + H2O = Fe(II)-heme o + diphosphate. The protein operates within porphyrin-containing compound metabolism; heme O biosynthesis; heme O from protoheme: step 1/1. Functionally, converts heme B (protoheme IX) to heme O by substitution of the vinyl group on carbon 2 of heme B porphyrin ring with a hydroxyethyl farnesyl side group. The polypeptide is Protoheme IX farnesyltransferase (Geotalea uraniireducens (strain Rf4) (Geobacter uraniireducens)).